Consider the following 176-residue polypeptide: Peptide methionine sulfoxide reductase MsrA (176 aa).

C12 is an active-site residue.

This sequence belongs to the MsrA Met sulfoxide reductase family.

It catalyses the reaction L-methionyl-[protein] + [thioredoxin]-disulfide + H2O = L-methionyl-(S)-S-oxide-[protein] + [thioredoxin]-dithiol. The catalysed reaction is [thioredoxin]-disulfide + L-methionine + H2O = L-methionine (S)-S-oxide + [thioredoxin]-dithiol. Has an important function as a repair enzyme for proteins that have been inactivated by oxidation. Catalyzes the reversible oxidation-reduction of methionine sulfoxide in proteins to methionine. The chain is Peptide methionine sulfoxide reductase MsrA from Thermus thermophilus (strain ATCC BAA-163 / DSM 7039 / HB27).